The primary structure comprises 224 residues: ATP phosphoribosyltransferase (224 aa).

The protein belongs to the ATP phosphoribosyltransferase family. Short subfamily. Heteromultimer composed of HisG and HisZ subunits.

It is found in the cytoplasm. The catalysed reaction is 1-(5-phospho-beta-D-ribosyl)-ATP + diphosphate = 5-phospho-alpha-D-ribose 1-diphosphate + ATP. The protein operates within amino-acid biosynthesis; L-histidine biosynthesis; L-histidine from 5-phospho-alpha-D-ribose 1-diphosphate: step 1/9. Its function is as follows. Catalyzes the condensation of ATP and 5-phosphoribose 1-diphosphate to form N'-(5'-phosphoribosyl)-ATP (PR-ATP). Has a crucial role in the pathway because the rate of histidine biosynthesis seems to be controlled primarily by regulation of HisG enzymatic activity. This chain is ATP phosphoribosyltransferase, found in Cupriavidus pinatubonensis (strain JMP 134 / LMG 1197) (Cupriavidus necator (strain JMP 134)).